Here is a 542-residue protein sequence, read N- to C-terminus: CTP synthase (542 aa).

The tract at residues 1 to 265 (MARYVFITGG…DSEVLAAFGI (265 aa)) is amidoligase domain. Ser-13 serves as a coordination point for CTP. Position 13 (Ser-13) interacts with UTP. ATP-binding positions include 14-19 (SLGKGI) and Asp-71. The Mg(2+) site is built by Asp-71 and Glu-139. CTP contacts are provided by residues 146-148 (DIE), 186-191 (KTKPTQ), and Lys-222. UTP contacts are provided by residues 186–191 (KTKPTQ) and Lys-222. The region spanning 291-541 (TIAIVGKYTG…VEAAVEQSRL (251 aa)) is the Glutamine amidotransferase type-1 domain. An L-glutamine-binding site is contributed by Gly-353. The Nucleophile; for glutamine hydrolysis role is filled by Cys-380. L-glutamine-binding positions include 381-384 (FGMQ), Glu-404, and Arg-469. Catalysis depends on residues His-514 and Glu-516.

It belongs to the CTP synthase family. Homotetramer.

The catalysed reaction is UTP + L-glutamine + ATP + H2O = CTP + L-glutamate + ADP + phosphate + 2 H(+). It carries out the reaction L-glutamine + H2O = L-glutamate + NH4(+). The enzyme catalyses UTP + NH4(+) + ATP = CTP + ADP + phosphate + 2 H(+). It participates in pyrimidine metabolism; CTP biosynthesis via de novo pathway; CTP from UDP: step 2/2. Its activity is regulated as follows. Allosterically activated by GTP, when glutamine is the substrate; GTP has no effect on the reaction when ammonia is the substrate. The allosteric effector GTP functions by stabilizing the protein conformation that binds the tetrahedral intermediate(s) formed during glutamine hydrolysis. Inhibited by the product CTP, via allosteric rather than competitive inhibition. Functionally, catalyzes the ATP-dependent amination of UTP to CTP with either L-glutamine or ammonia as the source of nitrogen. Regulates intracellular CTP levels through interactions with the four ribonucleotide triphosphates. The chain is CTP synthase from Agrobacterium fabrum (strain C58 / ATCC 33970) (Agrobacterium tumefaciens (strain C58)).